We begin with the raw amino-acid sequence, 190 residues long: Protein GrpE (190 aa).

A disordered region spans residues Met-1 to Ala-40. Positions Gly-22–Ala-40 are enriched in polar residues.

This sequence belongs to the GrpE family. As to quaternary structure, homodimer.

Its subcellular location is the cytoplasm. Functionally, participates actively in the response to hyperosmotic and heat shock by preventing the aggregation of stress-denatured proteins, in association with DnaK and GrpE. It is the nucleotide exchange factor for DnaK and may function as a thermosensor. Unfolded proteins bind initially to DnaJ; upon interaction with the DnaJ-bound protein, DnaK hydrolyzes its bound ATP, resulting in the formation of a stable complex. GrpE releases ADP from DnaK; ATP binding to DnaK triggers the release of the substrate protein, thus completing the reaction cycle. Several rounds of ATP-dependent interactions between DnaJ, DnaK and GrpE are required for fully efficient folding. This chain is Protein GrpE, found in Pediococcus pentosaceus (strain ATCC 25745 / CCUG 21536 / LMG 10740 / 183-1w).